An 879-amino-acid chain; its full sequence is Prostaglandin F2 receptor negative regulator (879 aa).

An N-terminal signal peptide occupies residues 1 to 21 (MGRPAPRPLLLALLSLAVCRG). 2 consecutive Ig-like C2-type domains span residues 22 to 137 (RVVR…DTVQ) and 149 to 263 (PSSR…QEIQ). The Extracellular segment spans residues 22-832 (RVVRVPAGTL…MDVLNAFKYP (811 aa)). Disulfide bonds link C43–C119 and C169–C247. A glycan (N-linked (GlcNAc...) asparagine) is linked at N44. The short motif at 89 to 91 (RGD) is the Cell attachment site element. T271 is subject to Phosphothreonine. Ig-like C2-type domains are found at residues 276–389 (PTAL…WHKV), 406–536 (PEYQ…DVFS), 544–662 (ASED…AWSP), and 688–813 (PTFN…AEIH). The cysteines at positions 299 and 373 are disulfide-linked. Residues N300, N383, and N413 are each glycosylated (N-linked (GlcNAc...) asparagine). The short motif at 424–427 (PTEL) is the Endoplasmic reticulum retention signal element. The cysteines at positions 429 and 515 are disulfide-linked. Residues N525, N600, N618, and N691 are each glycosylated (N-linked (GlcNAc...) asparagine). A disulfide bond links C571 and C655. A Cell attachment site motif is present at residues 703 to 705 (RGD). C711 and C793 form a disulfide bridge. A helical membrane pass occupies residues 833–853 (LLIGVGLSTVIGLLSCLIGYC). The Cytoplasmic portion of the chain corresponds to 854 to 879 (SSHWCCKKEVRETRRERRRLMSMEMD).

Interacts with CD9 and CD81. Part of a complex composed of CD9, CD81 and IGSF8. Also seems to interact with CD63, CD82 and CD151. In terms of tissue distribution, expressed in myoblasts (at protein level).

It is found in the endoplasmic reticulum membrane. Its subcellular location is the golgi apparatus. The protein localises to the trans-Golgi network membrane. Inhibits the binding of prostaglandin F2-alpha (PGF2-alpha) to its specific FP receptor, by decreasing the receptor number rather than the affinity constant. Functional coupling with the prostaglandin F2-alpha receptor seems to occur. In myoblasts, associates with tetraspanins CD9 and CD81 to prevent myotube fusion during muscle regeneration. In Mus musculus (Mouse), this protein is Prostaglandin F2 receptor negative regulator (Ptgfrn).